The sequence spans 121 residues: MSITKDQILEALAAMSVMEVVELIEAMEEKFGVSAAAAVVSGGSDAAAAEEKTEFDVVLTSHGDNKVAVIKALRAATGLGLKEAKGMAESAPVAVKEAISKEEAEALKADLEAAGAAVEIK.

It belongs to the bacterial ribosomal protein bL12 family. In terms of assembly, homodimer. Part of the ribosomal stalk of the 50S ribosomal subunit. Forms a multimeric L10(L12)X complex, where L10 forms an elongated spine to which 2 to 4 L12 dimers bind in a sequential fashion. Binds GTP-bound translation factors.

In terms of biological role, forms part of the ribosomal stalk which helps the ribosome interact with GTP-bound translation factors. Is thus essential for accurate translation. The protein is Large ribosomal subunit protein bL12 of Shewanella pealeana (strain ATCC 700345 / ANG-SQ1).